We begin with the raw amino-acid sequence, 397 residues long: Pyridinium-3,5-bisthiocarboxylic acid mononucleotide nickel insertion protein (397 aa).

The protein belongs to the LarC family.

The catalysed reaction is Ni(II)-pyridinium-3,5-bisthiocarboxylate mononucleotide = pyridinium-3,5-bisthiocarboxylate mononucleotide + Ni(2+). Its function is as follows. Involved in the biosynthesis of a nickel-pincer cofactor ((SCS)Ni(II) pincer complex). Binds Ni(2+), and functions in nickel delivery to pyridinium-3,5-bisthiocarboxylic acid mononucleotide (P2TMN), to form the mature cofactor. Is thus probably required for the activation of nickel-pincer cofactor-dependent enzymes. The chain is Pyridinium-3,5-bisthiocarboxylic acid mononucleotide nickel insertion protein from Thermotoga petrophila (strain ATCC BAA-488 / DSM 13995 / JCM 10881 / RKU-1).